A 969-amino-acid chain; its full sequence is Leucine--tRNA ligase (969 aa).

A 'HIGH' region motif is present at residues 45–55; sequence PYTNAPLHIGH. The 'KMSKS' region signature appears at 649–653; that stretch reads KMSKS. Lysine 652 provides a ligand contact to ATP.

This sequence belongs to the class-I aminoacyl-tRNA synthetase family.

The protein localises to the cytoplasm. The catalysed reaction is tRNA(Leu) + L-leucine + ATP = L-leucyl-tRNA(Leu) + AMP + diphosphate. In Staphylothermus marinus (strain ATCC 43588 / DSM 3639 / JCM 9404 / F1), this protein is Leucine--tRNA ligase.